Reading from the N-terminus, the 549-residue chain is Mitochondrial hydroperoxide bicyclase CYP50918A1 (549 aa).

Residues 1–75 (MPDAFDVSDD…PQGNRKPAVL (75 aa)) form a disordered region. Over residues 8-26 (SDDKQLVDQQLTRDSDSKP) the composition is skewed to basic and acidic residues. Over residues 27–41 (AAKPASKQKPPSKVP) the composition is skewed to low complexity. Position 491 (C491) interacts with heme. Residues 528-549 (DTGDHGPPNGKFSVIKPRQPKH) are disordered.

It belongs to the cytochrome P450 family. Heme is required as a cofactor.

It localises to the mitochondrion. It carries out the reaction (13S)-hydroperoxy-(9Z,11E,15Z)-octadecatrienoate = plasmodiophorol A. The catalysed reaction is (13S)-hydroperoxy-(9Z,11E,15Z)-octadecatrienoate = plasmodiophorol B. The protein operates within lipid metabolism; oxylipin biosynthesis. Functionally, cytochrome P450 hydroperoxide bicyclase involved in the metabolism of oxylipins natural products such as egregiachlorides, hybridalactone, ecklonialactones and related bicyclic oxylipins. Isomerizes the hydroperoxides into epoxyalcohols via epoxyallylic radical. Can use alpha-linolenic 13-hydroperoxide ((9Z,11E,13S,15Z)-13-hydroperoxy-9,11,15-octadecatrienoic, 13-HPOT) as preferred substrate to produce the heterobicyclic oxylipins plasmodiophorol A (6-oxabicyclo[3.1.0]hexane) and plasmodiophorol B (2-oxabicyclo[2.2.1]heptane) at the ratio 12:1 and a minor product plasmodiophorol C (cyclopentanediol) formed through the hydrolysis of plasmodiophorols A and B and, to a lower extent, active with linoleic acid 13-hydroperoxide ((9Z,11E,13S)-13-hydroperoxy-9,11-octadecadienoic, 13-HPOD), linoleic acid 9-hydroperoxide ((9S,10E,12Z)-9-hydroperoxy-10,12-octadecadienoic, 9-HPOD) and alpha-linolenic 9-hydroperoxide ((9S,10E,12Z,15Z)-9-hydroperoxy-10,12,15-octadecatrienoic, 9-HPOT). The sequence is that of Mitochondrial hydroperoxide bicyclase CYP50918A1 from Plasmodiophora brassicae (Clubroot disease agent).